Consider the following 134-residue polypeptide: Ribosome-binding factor A (134 aa).

This sequence belongs to the RbfA family. As to quaternary structure, monomer. Binds 30S ribosomal subunits, but not 50S ribosomal subunits or 70S ribosomes.

The protein localises to the cytoplasm. Functionally, one of several proteins that assist in the late maturation steps of the functional core of the 30S ribosomal subunit. Associates with free 30S ribosomal subunits (but not with 30S subunits that are part of 70S ribosomes or polysomes). Required for efficient processing of 16S rRNA. May interact with the 5'-terminal helix region of 16S rRNA. The sequence is that of Ribosome-binding factor A from Psychrobacter cryohalolentis (strain ATCC BAA-1226 / DSM 17306 / VKM B-2378 / K5).